The chain runs to 930 residues: Inter-alpha-trypsin inhibitor heavy chain H4 (930 aa).

The N-terminal stretch at methionine 1 to alanine 28 is a signal peptide. Positions glutamate 29–glutamate 148 constitute a VIT domain. Asparagine 81 and asparagine 207 each carry an N-linked (GlcNAc...) asparagine glycan. A VWFA domain is found at proline 272–aspartate 432. An N-linked (GlcNAc...) asparagine; atypical glycan is attached at asparagine 274. Residues asparagine 517 and asparagine 577 are each glycosylated (N-linked (GlcNAc...) asparagine). The segment at lysine 595–valine 618 is disordered. The segment at methionine 658–arginine 688 is proline-rich (PRR) potential bioactive peptide. The propeptide at proline 662 to arginine 688 is potentially active peptide. Residues threonine 719, threonine 720, and threonine 722 are each glycosylated (O-linked (GalNAc...) threonine). The O-glycosylated at three sites stretch occupies residues threonine 719–threonine 725. Residues cysteine 747 and cysteine 925 are joined by a disulfide bond.

Belongs to the ITIH family. Interacts (via C-terminus) with DNAJC1 (via SANT 2 domain); this interaction protects ITIH4 against cleavage by kallikrein in vitro. In terms of processing, cleaved by plasma kallikrein to yield 100 kDa and 35 kDa fragments, and the resulting 100 kDa fragment is further converted to a 70 kDa fragment. Post-translationally, N- and O-glycosylated. In urine, O-linked glycosylation on threonine residues in the region from Thr-719 to Thr-725 consists of core 1 or possibly core 8 glycans. Mainly Hex(HexNAc)(2), but also some Hex(3)(HexNAc)(3). N-glycosylated but not O-glycosylated in plasma. Liver specific.

The protein resides in the secreted. Type II acute-phase protein (APP) involved in inflammatory responses to trauma. May also play a role in liver development or regeneration. The protein is Inter-alpha-trypsin inhibitor heavy chain H4 (ITIH4) of Homo sapiens (Human).